Here is a 292-residue protein sequence, read N- to C-terminus: Protein/nucleic acid deglycase HchA (292 aa).

Over residues 1–12 (MSQDVNELSKQP) the composition is skewed to polar residues. A disordered region spans residues 1-23 (MSQDVNELSKQPTPDKAEDNAFF). Catalysis depends on Cys190, which acts as the Nucleophile.

Belongs to the peptidase C56 family. HchA subfamily.

Its subcellular location is the cytoplasm. The catalysed reaction is N(omega)-(1-hydroxy-2-oxopropyl)-L-arginyl-[protein] + H2O = lactate + L-arginyl-[protein] + H(+). The enzyme catalyses N(6)-(1-hydroxy-2-oxopropyl)-L-lysyl-[protein] + H2O = lactate + L-lysyl-[protein] + H(+). It carries out the reaction S-(1-hydroxy-2-oxopropyl)-L-cysteinyl-[protein] + H2O = lactate + L-cysteinyl-[protein] + H(+). It catalyses the reaction N(omega)-(1-hydroxy-2-oxoethyl)-L-arginyl-[protein] + H2O = L-arginyl-[protein] + glycolate + H(+). The catalysed reaction is N(6)-(1-hydroxy-2-oxoethyl)-L-lysyl-[protein] + H2O = glycolate + L-lysyl-[protein] + H(+). The enzyme catalyses S-(1-hydroxy-2-oxoethyl)-L-cysteinyl-[protein] + H2O = glycolate + L-cysteinyl-[protein] + H(+). It carries out the reaction N(2)-(1-hydroxy-2-oxopropyl)-dGTP + H2O = lactate + dGTP + H(+). It catalyses the reaction N(2)-(1-hydroxy-2-oxopropyl)-GTP + H2O = lactate + GTP + H(+). The catalysed reaction is N(2)-(1-hydroxy-2-oxopropyl)-GDP + H2O = lactate + GDP + H(+). The enzyme catalyses N(2)-(1-hydroxy-2-oxopropyl)-GMP + H2O = lactate + GMP + H(+). It carries out the reaction N(2)-(1-hydroxy-2-oxoethyl)-dGTP + H2O = dGTP + glycolate + H(+). It catalyses the reaction N(2)-(1-hydroxy-2-oxoethyl)-GTP + H2O = glycolate + GTP + H(+). The catalysed reaction is N(2)-(1-hydroxy-2-oxoethyl)-GDP + H2O = glycolate + GDP + H(+). The enzyme catalyses N(2)-(1-hydroxy-2-oxoethyl)-GMP + H2O = glycolate + GMP + H(+). It carries out the reaction an N(2)-(1-hydroxy-2-oxopropyl)-guanosine in RNA + H2O = a guanosine in RNA + lactate + H(+). It catalyses the reaction an N(2)-(1-hydroxy-2-oxopropyl)-2'-deoxyguanosine in DNA + H2O = a 2'-deoxyguanosine in DNA + lactate + H(+). The catalysed reaction is an N(2)-(1-hydroxy-2-oxoethyl)-guanosine in RNA + H2O = a guanosine in RNA + glycolate + H(+). The enzyme catalyses an N(2)-(1-hydroxy-2-oxoethyl)-2'-deoxyguanosine in DNA + H2O = a 2'-deoxyguanosine in DNA + glycolate + H(+). Its function is as follows. Protein and nucleotide deglycase that catalyzes the deglycation of the Maillard adducts formed between amino groups of proteins or nucleotides and reactive carbonyl groups of glyoxals. Thus, functions as a protein deglycase that repairs methylglyoxal- and glyoxal-glycated proteins, and releases repaired proteins and lactate or glycolate, respectively. Deglycates cysteine, arginine and lysine residues in proteins, and thus reactivates these proteins by reversing glycation by glyoxals. Acts on early glycation intermediates (hemithioacetals and aminocarbinols), preventing the formation of Schiff bases and advanced glycation endproducts (AGE). Also functions as a nucleotide deglycase able to repair glycated guanine in the free nucleotide pool (GTP, GDP, GMP, dGTP) and in DNA and RNA. Is thus involved in a major nucleotide repair system named guanine glycation repair (GG repair), dedicated to reversing methylglyoxal and glyoxal damage via nucleotide sanitization and direct nucleic acid repair. Plays an important role in protecting cells from carbonyl stress. This chain is Protein/nucleic acid deglycase HchA, found in Staphylococcus aureus (strain bovine RF122 / ET3-1).